We begin with the raw amino-acid sequence, 525 residues long: MRRRRRRDGFYPAPDFRHREAEDMAGVFDIDLDQPEDAGSEDELEEGGQLNESMDHGGVGPYELGMEHCEKFEISETSVNRGPEKIRPECFELLRVLGKGGYGKVFQVRKVTGANTGKIFAMKVLKKAMIVRNAKDTAHTKAERNILEEVKHPFIVDLIYAFQTGGKLYLILEYLSGGELFMQLEREGIFMEDTACFYLAEISMALGHLHQKGIIYRDLKPENIMLNHQGHVKLTDFGLCKESIHDGTVTHTFCGTIEYMAPEILMRSGHNRAVDWWSLGALMYDMLTGAPPFTGENRKKTIDKILKCKLNLPPYLTQEARDLLKKLLKRNAASRLGAGPGDAGEVQAHPFFRHINWEELLARKVEPPFKPLLQSEEDVSQFDSKFTRQTPVDSPDDSTLSESANQVFLGFTYVAPSVLESVKEKFSFEPKIRSPRRFIGSPRTPVSPVKFSPGDFWGRGASASTANPQTPVEYPMETSGIEQMDVTTSGEASAPLPIRQPNSGPYKKQAFPMISKRPEHLRMNL.

The TOS motif signature appears at 28 to 32; the sequence is FDIDL. The interval 28-54 is disordered; it reads FDIDLDQPEDAGSEDELEEGGQLNESM. The segment covering 30–46 has biased composition (acidic residues); it reads IDLDQPEDAGSEDELEE. Residues 91 to 352 enclose the Protein kinase domain; it reads FELLRVLGKG…AGEVQAHPFF (262 aa). Residues 97 to 105 and Lys-123 each bind ATP; that span reads LGKGGYGKV. The active-site Proton acceptor is Asp-218. Thr-252 carries the post-translational modification Phosphothreonine; by PDPK1. The 71-residue stretch at 353-423 folds into the AGC-kinase C-terminal domain; it reads RHINWEELLA…VAPSVLESVK (71 aa). Residues 380-399 are disordered; it reads SQFDSKFTRQTPVDSPDDST. A compositionally biased stretch (polar residues) spans 381–399; sequence QFDSKFTRQTPVDSPDDST. The residue at position 394 (Ser-394) is a Phosphoserine. A Phosphothreonine; by MTOR, NEK6 and NEK7 modification is found at Thr-412. Positions 424 to 525 are autoinhibitory domain; the sequence is EKFSFEPKIR…KRPEHLRMNL (102 aa). A phosphoserine mark is found at Ser-434 and Ser-441. Thr-444 bears the Phosphothreonine mark. Phosphoserine is present on residues Ser-447 and Ser-452. The interval 486–509 is disordered; sequence VTTSGEASAPLPIRQPNSGPYKKQ. Lys-516 is modified (N6-acetyllysine).

It belongs to the protein kinase superfamily. AGC Ser/Thr protein kinase family. S6 kinase subfamily. As to quaternary structure, interacts with PPP1R9A/neurabin-1. Interacts with RPTOR. Interacts with IRS1. Interacts with EIF3B and EIF3C. Interacts with POLDIP3. Interacts with TRAF4. Interacts (via N-terminus) with IER5. Dephosphorylation by PPP1CC at Thr-412 in mitochondrion. Phosphorylation at Thr-412 is regulated by mTORC1. The phosphorylation at this site is maintained by an agonist-dependent autophosphorylation mechanism. Activated by phosphorylation at Thr-252 by PDPK1. In terms of tissue distribution, brain.

It is found in the cytoplasm. The protein resides in the synapse. It localises to the synaptosome. Its subcellular location is the mitochondrion outer membrane. The protein localises to the mitochondrion. The enzyme catalyses L-seryl-[protein] + ATP = O-phospho-L-seryl-[protein] + ADP + H(+). It catalyses the reaction L-threonyl-[protein] + ATP = O-phospho-L-threonyl-[protein] + ADP + H(+). Its activity is regulated as follows. Activation requires multiple phosphorylation events on serine/threonine residues. Activation appears to be first mediated by phosphorylation of multiple sites in the autoinhibitory domain, which facilitates phosphorylation at Thr-412, disrupting the autoinhibitory mechanism and allowing phosphorylation of Thr-252 by PDPK1. The active conformation of the kinase is believed to be stabilized by a mechanism involving three conserved phosphorylation sites located in the kinase domain activation loop (Thr-252) and in the AGC-kinase C-terminal domain (Ser-394 in the middle of the tail/linker region and Thr-412 within a hydrophobic motif at its end). Activated by mTORC1; isoform Alpha I and isoform Alpha II are sensitive to rapamycin, which inhibits activating phosphorylation at Thr-412. Activated by PDPK1. Its function is as follows. Serine/threonine-protein kinase that acts downstream of mTOR signaling in response to growth factors and nutrients to promote cell proliferation, cell growth and cell cycle progression. Regulates protein synthesis through phosphorylation of EIF4B, RPS6 and EEF2K, and contributes to cell survival by repressing the pro-apoptotic function of BAD. Under conditions of nutrient depletion, the inactive form associates with the EIF3 translation initiation complex. Upon mitogenic stimulation, phosphorylation by the mechanistic target of rapamycin complex 1 (mTORC1) leads to dissociation from the EIF3 complex and activation. The active form then phosphorylates and activates several substrates in the pre-initiation complex, including the EIF2B complex and the cap-binding complex component EIF4B. Also controls translation initiation by phosphorylating a negative regulator of EIF4A, PDCD4, targeting it for ubiquitination and subsequent proteolysis. Promotes initiation of the pioneer round of protein synthesis by phosphorylating POLDIP3/SKAR. In response to IGF1, activates translation elongation by phosphorylating EEF2 kinase (EEF2K), which leads to its inhibition and thus activation of EEF2. Also plays a role in feedback regulation of mTORC2 by mTORC1 by phosphorylating MAPKAP1/SIN1, MTOR and RICTOR, resulting in the inhibition of mTORC2 and AKT1 signaling. Also involved in feedback regulation of mTORC1 and mTORC2 by phosphorylating DEPTOR. Mediates cell survival by phosphorylating the pro-apoptotic protein BAD and suppressing its pro-apoptotic function. Phosphorylates mitochondrial URI1 leading to dissociation of a URI1-PPP1CC complex. The free mitochondrial PPP1CC can then dephosphorylate RPS6KB1 at Thr-412, which is proposed to be a negative feedback mechanism for the RPS6KB1 anti-apoptotic function. Mediates TNF-alpha-induced insulin resistance by phosphorylating IRS1 at multiple serine residues, resulting in accelerated degradation of IRS1. In cells lacking functional TSC1-2 complex, constitutively phosphorylates and inhibits GSK3B. May be involved in cytoskeletal rearrangement through binding to neurabin. Phosphorylates and activates the pyrimidine biosynthesis enzyme CAD, downstream of MTOR. Following activation by mTORC1, phosphorylates EPRS and thereby plays a key role in fatty acid uptake by adipocytes and also most probably in interferon-gamma-induced translation inhibition. The polypeptide is Ribosomal protein S6 kinase beta-1 (Rps6kb1) (Rattus norvegicus (Rat)).